The following is a 223-amino-acid chain: Neurotrophic factor BDNF precursor form (223 aa).

The signal sequence occupies residues 1 to 5; the sequence is SCMKA. A propeptide spanning residues 6–114 is cleaved from the precursor; it reads APMKEVSIRG…AANMSMRVRR (109 aa). A glycan (N-linked (GlcNAc...) asparagine) is linked at Asn-107. 2 disulfides stabilise this stretch: Cys-127–Cys-194 and Cys-172–Cys-223.

The protein belongs to the NGF-beta family.

Its subcellular location is the secreted. Functionally, promotes the survival of neuronal populations that are all located either in the central nervous system or directly connected to it. The polypeptide is Neurotrophic factor BDNF precursor form (BDNF) (Aspidites melanocephalus (Black-headed python)).